A 615-amino-acid chain; its full sequence is Dihydroxy-acid dehydratase (615 aa).

Asp-85 lines the Mg(2+) pocket. Cys-126 serves as a coordination point for [2Fe-2S] cluster. Positions 127 and 128 each coordinate Mg(2+). Lys-128 is subject to N6-carboxylysine. Cys-199 is a [2Fe-2S] cluster binding site. Glu-495 contacts Mg(2+). Residue Ser-521 is the Proton acceptor of the active site.

The protein belongs to the IlvD/Edd family. Homodimer. [2Fe-2S] cluster is required as a cofactor. The cofactor is Mg(2+).

The catalysed reaction is (2R)-2,3-dihydroxy-3-methylbutanoate = 3-methyl-2-oxobutanoate + H2O. It carries out the reaction (2R,3R)-2,3-dihydroxy-3-methylpentanoate = (S)-3-methyl-2-oxopentanoate + H2O. The protein operates within amino-acid biosynthesis; L-isoleucine biosynthesis; L-isoleucine from 2-oxobutanoate: step 3/4. Its pathway is amino-acid biosynthesis; L-valine biosynthesis; L-valine from pyruvate: step 3/4. Functions in the biosynthesis of branched-chain amino acids. Catalyzes the dehydration of (2R,3R)-2,3-dihydroxy-3-methylpentanoate (2,3-dihydroxy-3-methylvalerate) into 2-oxo-3-methylpentanoate (2-oxo-3-methylvalerate) and of (2R)-2,3-dihydroxy-3-methylbutanoate (2,3-dihydroxyisovalerate) into 2-oxo-3-methylbutanoate (2-oxoisovalerate), the penultimate precursor to L-isoleucine and L-valine, respectively. The sequence is that of Dihydroxy-acid dehydratase from Mannheimia succiniciproducens (strain KCTC 0769BP / MBEL55E).